The sequence spans 108 residues: uncharacterized protein (108 aa).

3 disulfides stabilise this stretch: cysteine 44/cysteine 82, cysteine 60/cysteine 78, and cysteine 63/cysteine 91.

The protein belongs to the arthropod CHH/MIH/GIH/VIH hormone family.

This is an uncharacterized protein from Caenorhabditis elegans.